The following is a 220-amino-acid chain: UPF0643 protein PB2B2.08 (220 aa).

It belongs to the UPF0643 family.

The protein localises to the cytoplasm. Its subcellular location is the nucleus. The sequence is that of UPF0643 protein PB2B2.08 from Schizosaccharomyces pombe (strain 972 / ATCC 24843) (Fission yeast).